A 378-amino-acid polypeptide reads, in one-letter code: Protein-glutamate methylesterase/protein-glutamine glutaminase 2 (378 aa).

A Response regulatory domain is found at 4-121 (KVLVVDDSGF…SRNPEKVKQL (118 aa)). A 4-aspartylphosphate modification is found at Asp55. A disordered region spans residues 141-188 (APAPAAAPTPAPIPAAAPSSFGSHSAPARPAPAPAPTRAPAASASSPA). The span at 145–155 (AAAPTPAPIPA) shows a compositional bias: pro residues. Composition is skewed to low complexity over residues 156-168 (AAPS…SAPA) and 178-188 (RAPAASASSPA). Positions 187-378 (PAPKRKNYKL…IGKHIVEACV (192 aa)) constitute a CheB-type methylesterase domain. Residues Ser202, His229, and Asp322 contribute to the active site.

This sequence belongs to the CheB family. Post-translationally, phosphorylated by CheA. Phosphorylation of the N-terminal regulatory domain activates the methylesterase activity.

It localises to the cytoplasm. It catalyses the reaction [protein]-L-glutamate 5-O-methyl ester + H2O = L-glutamyl-[protein] + methanol + H(+). The catalysed reaction is L-glutaminyl-[protein] + H2O = L-glutamyl-[protein] + NH4(+). Involved in chemotaxis. Part of a chemotaxis signal transduction system that modulates chemotaxis in response to various stimuli. Catalyzes the demethylation of specific methylglutamate residues introduced into the chemoreceptors (methyl-accepting chemotaxis proteins or MCP) by CheR. Also mediates the irreversible deamidation of specific glutamine residues to glutamic acid. The protein is Protein-glutamate methylesterase/protein-glutamine glutaminase 2 of Pseudomonas fluorescens (strain Pf0-1).